Reading from the N-terminus, the 472-residue chain is RNA pseudouridine synthase 6, chloroplastic (472 aa).

The N-terminal 66 residues, 1–66 (MASPALTGGY…TDSQNQTTLS (66 aa)), are a transit peptide targeting the chloroplast. Positions 101–208 (VLVSEFISKQ…SPRCYEIDWK (108 aa)) constitute an S4 RNA-binding domain. Residue Asp261 is part of the active site.

This sequence belongs to the pseudouridine synthase RluA family.

Its subcellular location is the plastid. The protein localises to the chloroplast. It carries out the reaction a uridine in RNA = a pseudouridine in RNA. The polypeptide is RNA pseudouridine synthase 6, chloroplastic (Arabidopsis thaliana (Mouse-ear cress)).